Here is a 514-residue protein sequence, read N- to C-terminus: Putative binding protein HI_0213 (514 aa).

Positions 1–23 (MNNLFALCQRSAVIFSIIFTVVA) are cleaved as a signal peptide. C24 is lipidated: N-palmitoyl cysteine. C24 carries the S-diacylglycerol cysteine lipid modification.

Belongs to the bacterial solute-binding protein 5 family.

The protein localises to the cell membrane. In terms of biological role, part of a binding-protein-dependent transport system. The sequence is that of Putative binding protein HI_0213 from Haemophilus influenzae (strain ATCC 51907 / DSM 11121 / KW20 / Rd).